Reading from the N-terminus, the 184-residue chain is UPF0149 protein Pmen_0324 (184 aa).

This sequence belongs to the UPF0149 family.

The chain is UPF0149 protein Pmen_0324 from Ectopseudomonas mendocina (strain ymp) (Pseudomonas mendocina).